A 647-amino-acid polypeptide reads, in one-letter code: Dihydrolipoyllysine-residue acetyltransferase component of pyruvate dehydrogenase complex (647 aa).

The transit peptide at 1–86 directs the protein to the mitochondrion; sequence MWRVCARRAQ…LWGSPSRRWY (86 aa). The region spanning 91–167 is the Lipoyl-binding 1 domain; sequence HQKVPLPSLS…PVGAIICITV (77 aa). Phosphoserine is present on Ser100. At Lys132 the chain carries N6-lipoyllysine. The disordered stretch occupies residues 184-216; it reads SAAPAPPAAPAPTPAAPAPSPTPSAQAPGSSYP. Positions 187 to 205 are enriched in pro residues; it reads PAPPAAPAPTPAAPAPSPT. Residues 218-294 enclose the Lipoyl-binding 2 domain; that stretch reads HMQVLLPALS…PLGTPLCIIV (77 aa). Lys259 bears the N6-lipoyllysine mark. The segment at 311-352 is disordered; that stretch reads VTDLKPPAPPPIPSPAAPVPPAPQPVAPPPSAPRPAAPAGPK. Over residues 316 to 348 the composition is skewed to pro residues; it reads PPAPPPIPSPAAPVPPAPQPVAPPPSAPRPAAP. Positions 356–393 constitute a Peripheral subunit-binding (PSBD) domain; it reads FVSPLAKKLAAEKGIDLTQVKGTGPDGRIIKKDIDSFV. Residue Arg461 participates in CoA binding. Residue Lys466 is modified to N6-acetyllysine. Lys473 is modified (N6-succinyllysine). Ser475 lines the CoA pocket. Lys547 carries the N6-succinyllysine modification. Residues Ser566, Asn567, and Gly591 each coordinate CoA. Residues His620 and Asp624 contribute to the active site.

The protein belongs to the 2-oxoacid dehydrogenase family. As to quaternary structure, part of the pyruvate dehydrogenase complex (PDHc) that is a multi-enzyme complex composed of multiple copies of three enzymes, pyruvate dehydrogenase (subunits PDH1A and PDHB, E1 component), dihydrolipoamide acetyltransferase (DLAT, E2 component), and dihydrolipoamide dehydrogenase (DLD, E3 component) to which is added an additional protein the E3-binding protein (PDHX, E3BP). In terms of structural architecture, the E2 and E3BP components assemble into a 60meric central core with icosahedral symmetry. The central core is decorated with E1 and E3 proteins. Currently, two alternative models for the E2:E3BP stoichiometry are considered as being either 48:12 (E2(48)-E3BP(12)) or 40:20 (E2(40)-E3BP(20)). Interacts with PDK2 and PDK3. Interacts with SIRT4. Interacts with PDHB. Requires (R)-lipoate as cofactor. Delipoylated at Lys-132 and Lys-259 by SIRT4, delipoylation decreases the PHD complex activity.

The protein resides in the mitochondrion matrix. It carries out the reaction N(6)-[(R)-dihydrolipoyl]-L-lysyl-[protein] + acetyl-CoA = N(6)-[(R)-S(8)-acetyldihydrolipoyl]-L-lysyl-[protein] + CoA. Functionally, as part of the pyruvate dehydrogenase complex, catalyzes the transfers of an acetyl group to a lipoic acid moiety. The pyruvate dehydrogenase complex, catalyzes the overall conversion of pyruvate to acetyl-CoA and CO(2), and thereby links cytoplasmic glycolysis and the mitochondrial tricarboxylic acid (TCA) cycle. The polypeptide is Dihydrolipoyllysine-residue acetyltransferase component of pyruvate dehydrogenase complex (Bos taurus (Bovine)).